A 90-amino-acid polypeptide reads, in one-letter code: Molybdopterin synthase sulfur carrier subunit (90 aa).

Glycine 90 bears the 1-thioglycine; alternate mark. Glycyl adenylate; alternate is present on glycine 90.

It belongs to the MoaD family. MOCS2A subfamily. Heterotetramer; composed of 2 small (Mocs2A) and 2 large (Mocs2B) subunits. C-terminal thiocarboxylation occurs in 2 steps, it is first acyl-adenylated (-COAMP) via the hesA/moeB/thiF part of MOCS3, then thiocarboxylated (-COSH) via the rhodanese domain of MOCS3.

Its subcellular location is the cytoplasm. It functions in the pathway cofactor biosynthesis; molybdopterin biosynthesis. Functionally, acts as a sulfur carrier required for molybdopterin biosynthesis. Component of the molybdopterin synthase complex that catalyzes the conversion of precursor Z into molybdopterin by mediating the incorporation of 2 sulfur atoms into precursor Z to generate a dithiolene group. In the complex, serves as sulfur donor by being thiocarboxylated (-COSH) at its C-terminus by MOCS3. After interaction with Mocs2B, the sulfur is then transferred to precursor Z to form molybdopterin. This is Molybdopterin synthase sulfur carrier subunit from Drosophila sechellia (Fruit fly).